Here is a 190-residue protein sequence, read N- to C-terminus: Peptide methionine sulfoxide reductase MsrA (190 aa).

Cys21 is a catalytic residue.

The protein belongs to the MsrA Met sulfoxide reductase family.

The enzyme catalyses L-methionyl-[protein] + [thioredoxin]-disulfide + H2O = L-methionyl-(S)-S-oxide-[protein] + [thioredoxin]-dithiol. It catalyses the reaction [thioredoxin]-disulfide + L-methionine + H2O = L-methionine (S)-S-oxide + [thioredoxin]-dithiol. Has an important function as a repair enzyme for proteins that have been inactivated by oxidation. Catalyzes the reversible oxidation-reduction of methionine sulfoxide in proteins to methionine. The polypeptide is Peptide methionine sulfoxide reductase MsrA (Polynucleobacter asymbioticus (strain DSM 18221 / CIP 109841 / QLW-P1DMWA-1) (Polynucleobacter necessarius subsp. asymbioticus)).